The sequence spans 339 residues: Phenylalanine--tRNA ligase alpha subunit (339 aa).

Position 254 (Glu254) interacts with Mg(2+).

The protein belongs to the class-II aminoacyl-tRNA synthetase family. Phe-tRNA synthetase alpha subunit type 1 subfamily. As to quaternary structure, tetramer of two alpha and two beta subunits. Mg(2+) serves as cofactor.

It is found in the cytoplasm. It catalyses the reaction tRNA(Phe) + L-phenylalanine + ATP = L-phenylalanyl-tRNA(Phe) + AMP + diphosphate + H(+). In Clostridium novyi (strain NT), this protein is Phenylalanine--tRNA ligase alpha subunit.